The chain runs to 95 residues: Large ribosomal subunit protein uL23 (95 aa).

It belongs to the universal ribosomal protein uL23 family. As to quaternary structure, part of the 50S ribosomal subunit. Contacts protein L29, and trigger factor when it is bound to the ribosome.

Its function is as follows. One of the early assembly proteins it binds 23S rRNA. One of the proteins that surrounds the polypeptide exit tunnel on the outside of the ribosome. Forms the main docking site for trigger factor binding to the ribosome. The sequence is that of Large ribosomal subunit protein uL23 from Lawsonia intracellularis (strain PHE/MN1-00).